The following is a 100-amino-acid chain: Elicitin Vex2 (100 aa).

Cystine bridges form between Cys-3–Cys-71, Cys-27–Cys-56, and Cys-51–Cys-95.

Belongs to the elicitin family.

It is found in the secreted. Its function is as follows. Induces local and distal defense responses (incompatible hypersensitive reaction) in plants from the solanaceae and cruciferae families. Elicits leaf necrosis and causes the accumulation of pathogenesis-related proteins. Might interact with the lipidic molecules of the plasma membrane. This chain is Elicitin Vex2, found in Phytopythium vexans (Damping-off fungus).